The primary structure comprises 444 residues: MTLDLSKPANAGYQSGFANEFATEALPGALPHGRNSPQRAPYGLYAEQLSGTAFTAPRGHNRRSWLYRIRPAAVHRPFEPYAGPQRLVSEFGDSADVPPTPPDQLRWDPLPMPVEPTDFVDGLVTMAGNGSAAAMNGCAIHLYAANRSMQDRFFYSADGELLIVPQQGRLFIATEFGRVEVEPFEIAVIPRGVRFSVTLPDGDARGYICENFGAQLRLPDLGPIGSNGLANPRDFLTPQAAYEDREGAFELIAKLNGRLWRADIGHSPLDVVAWHGNYAPYKYDLRLFNTIGSISFDHPDPSIFLVLQSQSDTPGVDTIDFVIFPPRWLAAEDTFRPPWFHRNVASEFMGLVHGAYDAKAEGFVPGGASLHNCMSGHGPDADTFEKASASDTTKPHKVDATMAFMFETRTLIRPTRYALDTAQLQADYFECWQGIKKHFNPEQR.

His-298 functions as the Proton acceptor in the catalytic mechanism. Fe cation contacts are provided by His-341 and Glu-347. 2 residues coordinate homogentisate: Tyr-356 and His-377. Fe cation is bound at residue His-377.

Belongs to the homogentisate dioxygenase family. Hexamer; dimer of trimers. Requires Fe cation as cofactor.

The enzyme catalyses homogentisate + O2 = 4-maleylacetoacetate + H(+). It participates in amino-acid degradation; L-phenylalanine degradation; acetoacetate and fumarate from L-phenylalanine: step 4/6. Its function is as follows. Involved in the catabolism of homogentisate (2,5-dihydroxyphenylacetate or 2,5-OH-PhAc), a central intermediate in the degradation of phenylalanine and tyrosine. Catalyzes the oxidative ring cleavage of the aromatic ring of homogentisate to yield maleylacetoacetate. In Burkholderia lata (strain ATCC 17760 / DSM 23089 / LMG 22485 / NCIMB 9086 / R18194 / 383), this protein is Homogentisate 1,2-dioxygenase.